The primary structure comprises 127 residues: Small ribosomal subunit protein uS11 (127 aa).

The protein belongs to the universal ribosomal protein uS11 family. Part of the 30S ribosomal subunit. Interacts with proteins S7 and S18. Binds to IF-3.

In terms of biological role, located on the platform of the 30S subunit, it bridges several disparate RNA helices of the 16S rRNA. Forms part of the Shine-Dalgarno cleft in the 70S ribosome. In Chlorobium phaeobacteroides (strain DSM 266 / SMG 266 / 2430), this protein is Small ribosomal subunit protein uS11.